The chain runs to 134 residues: Small ribosomal subunit protein uS8c (134 aa).

The protein belongs to the universal ribosomal protein uS8 family. As to quaternary structure, part of the 30S ribosomal subunit.

Its subcellular location is the plastid. It localises to the chloroplast. In terms of biological role, one of the primary rRNA binding proteins, it binds directly to 16S rRNA central domain where it helps coordinate assembly of the platform of the 30S subunit. This Capsella bursa-pastoris (Shepherd's purse) protein is Small ribosomal subunit protein uS8c (rps8).